Here is a 119-residue protein sequence, read N- to C-terminus: MLYTGTDIIEIRRIKAAQARWGKRFLNRIFTPAELSLCKDRLPSLAARFAAKEAVIKALSLPKNQSYSEIETLNLPDGQPSVNLYGQALAKAITLGIKQISVSLSHCREYAIAMVVAQD.

Mg(2+) contacts are provided by aspartate 7 and glutamate 53.

This sequence belongs to the P-Pant transferase superfamily. AcpS family. Mg(2+) serves as cofactor.

It is found in the cytoplasm. It carries out the reaction apo-[ACP] + CoA = holo-[ACP] + adenosine 3',5'-bisphosphate + H(+). In terms of biological role, transfers the 4'-phosphopantetheine moiety from coenzyme A to a Ser of acyl-carrier-protein. The chain is Holo-[acyl-carrier-protein] synthase from Dehalococcoides mccartyi (strain ATCC BAA-2266 / KCTC 15142 / 195) (Dehalococcoides ethenogenes (strain 195)).